A 64-amino-acid polypeptide reads, in one-letter code: Small, acid-soluble spore protein beta (64 aa).

Belongs to the alpha/beta-type SASP family.

Its function is as follows. SASP are bound to spore DNA. They are double-stranded DNA-binding proteins that cause DNA to change to an a-like conformation. They protect the DNA backbone from chemical and enzymatic cleavage and are thus involved in dormant spore's high resistance to UV light. This chain is Small, acid-soluble spore protein beta, found in Paraclostridium bifermentans (Clostridium bifermentans).